The sequence spans 175 residues: Large ribosomal subunit protein uL10 (175 aa).

Belongs to the universal ribosomal protein uL10 family. Part of the ribosomal stalk of the 50S ribosomal subunit. The N-terminus interacts with L11 and the large rRNA to form the base of the stalk. The C-terminus forms an elongated spine to which L12 dimers bind in a sequential fashion forming a multimeric L10(L12)X complex.

Functionally, forms part of the ribosomal stalk, playing a central role in the interaction of the ribosome with GTP-bound translation factors. The sequence is that of Large ribosomal subunit protein uL10 from Cyanothece sp. (strain PCC 7425 / ATCC 29141).